The chain runs to 342 residues: S-adenosylmethionine:tRNA ribosyltransferase-isomerase (342 aa).

This sequence belongs to the QueA family. Monomer.

It is found in the cytoplasm. The catalysed reaction is 7-aminomethyl-7-carbaguanosine(34) in tRNA + S-adenosyl-L-methionine = epoxyqueuosine(34) in tRNA + adenine + L-methionine + 2 H(+). It participates in tRNA modification; tRNA-queuosine biosynthesis. Transfers and isomerizes the ribose moiety from AdoMet to the 7-aminomethyl group of 7-deazaguanine (preQ1-tRNA) to give epoxyqueuosine (oQ-tRNA). In Sulfurimonas denitrificans (strain ATCC 33889 / DSM 1251) (Thiomicrospira denitrificans (strain ATCC 33889 / DSM 1251)), this protein is S-adenosylmethionine:tRNA ribosyltransferase-isomerase.